Reading from the N-terminus, the 109-residue chain is Large ribosomal subunit protein uL22 (109 aa).

The protein belongs to the universal ribosomal protein uL22 family. In terms of assembly, part of the 50S ribosomal subunit.

This protein binds specifically to 23S rRNA; its binding is stimulated by other ribosomal proteins, e.g. L4, L17, and L20. It is important during the early stages of 50S assembly. It makes multiple contacts with different domains of the 23S rRNA in the assembled 50S subunit and ribosome. Functionally, the globular domain of the protein is located near the polypeptide exit tunnel on the outside of the subunit, while an extended beta-hairpin is found that lines the wall of the exit tunnel in the center of the 70S ribosome. The sequence is that of Large ribosomal subunit protein uL22 from Thiobacillus denitrificans (strain ATCC 25259 / T1).